An 821-amino-acid polypeptide reads, in one-letter code: MPLVRLQVRNVYGLGQKELHTKVDREDPKAILDDVAVSGLVGILRQLGDLTEFAAEIFHGIQEEVMITASRSNKLKMRLKQIEAKVPTIQKTVLAQTNHIHFAYTGGLEWHPRIPNVQNHFMYDELPPFIMTPYEDCREPPRLHLLDKFDINGPGSCLKRYSDPTHFKRASRASKPSEIKKKKSIQRGRDISRLASVANQSDRKTCTSLSFSGRTSTSKTASTIEIESKSDLQEHRSFSFDSRSGGEKPKRVSSSSRFTPGSRTIASVLSESESESDSPSQDLTARGSSSVSWHEKAEIVECNVLQCATDEAPEVMETNFVLDAEPVSRLKEHSAVEAVQDIKPKELEMDNEDETESEGDDFVDALYTIDSESENDEAFQATKEVQKNLYNDITEQETEKISNNFSVDETKCAATSELHLSSSPVYKSDELIHQDPWAASEISSGTHSYSNGFSNPLYDISGIQEHQESEEVESSCDTESIKTWTNGNLLGLKPSKPKIIAETIPEIVEDIDSETFQEHLREDYKAPFDWFTSSPPLDHMKISFKSSETLPSSELQLKLPDEYTFSSFQLVPETIATSLPDSDSDKDTFCRSSSYISDNSDNDNRSVSMSEQQWEEESEGIRESKRQQELYDSFHRVNAEASSLPVPFPKIETTNGCLVENVSYLQNPAEPLPPPLPPLQWMVSKIPSAGFEDNNKQSLKDALTQAFEKNNNSLTAVKKKEPHIVTVSDPKLVTKVHLKNNVRDYKQSHGNTNETEAGDFLHQIRTKQFNLRRVVRTKTSSSETTMNTNISVILEKANSIRQAVASDDGEGESDTWSDSDT.

Disordered regions lie at residues 168–189, 205–289, and 577–625; these read KRASRASKPSEIKKKKSIQRGR, TCTS…RGSS, and TSLP…RESK. The span at 206 to 225 shows a compositional bias: polar residues; it reads CTSLSFSGRTSTSKTASTIE. Residues 226–250 show a composition bias toward basic and acidic residues; it reads IESKSDLQEHRSFSFDSRSGGEKPK. The span at 252-265 shows a compositional bias: polar residues; that stretch reads VSSSSRFTPGSRTI. A compositionally biased stretch (low complexity) spans 592–612; sequence SSSYISDNSDNDNRSVSMSEQ. Residues 756–774 enclose the WH2 domain; sequence EAGDFLHQIRTKQFNLRRV. The interval 802 to 821 is disordered; sequence QAVASDDGEGESDTWSDSDT. Acidic residues predominate over residues 807–821; it reads DDGEGESDTWSDSDT.

Belongs to the SCAR/WAVE family. In terms of assembly, binds BRK1 and actin. Interacts with SPK1, ABI1 and ABI2. In terms of tissue distribution, expressed in expanding cotyledons, expanding leaves and expanding siliques containing developing embryos. Detected in unopened flower buds and in the expanding tip region of roots. Reduced expression in mature leaves and mature cotyledons.

The protein resides in the cytoplasm. Its subcellular location is the cytoskeleton. Its function is as follows. Involved in regulation of actin and microtubule organization. Part of a WAVE complex that activates the Arp2/3 complex. Regulates trichome branch positioning and expansion. The polypeptide is Protein SCAR1 (SCAR1) (Arabidopsis thaliana (Mouse-ear cress)).